Reading from the N-terminus, the 492-residue chain is MQTNKQPKQQFSEKQFIAFVFNYIAGFGFISVVMTMFDVGPFSYLVLGLTSFAILGVVLSFSRLSVLCGNSAYGGSYLIAKKAVGTNSKTKRFFVFLSGWNVSLTGSFNGVVIPAVLIFSFADIPVVKANNNIIIGLLVGGFLLFGLLTFISLFGLKINKKAIFYFAVIKWIVVIGGFILGIYLIGTTNGKGFVENNLIGTRENIDFFKIIFISLALTIAFAGTEDLASITPDVKSNNLRKCFLIAFGCVVLLYLVGFVIISGLDGIRGYGLALGNKDPKAINNYGSIYRLVGGVPLLVIYGLGLLVNSLASRLSMTITTARKYVALAQDGFLPSFLAKTNKHNEYHHAVLISNLMTLLVMLIMVIIPFLPDHNNNNNSLFNAIEQLVTVTIEMAAAISLIQYFITFIFFFMIFAKKENQKLIPLWEKVSYVISFALVSVLLFVPLFPFNQWTVFNTFKIVVLICFYLLGVGFFGYAEWKNKNKYQLMNNNS.

A run of 12 helical transmembrane segments spans residues 16–36 (FIAF…VMTM), 39–59 (VGPF…GVVL), 107–127 (SFNG…IPVV), 133–153 (IIIG…FISL), 162–182 (AIFY…ILGI), 210–230 (IIFI…LASI), 243–263 (FLIA…IISG), 291–311 (LVGG…NSLA), 350–370 (VLIS…IPFL), 394–414 (MAAA…FMIF), 429–449 (VSYV…LFPF), and 454–474 (VFNT…VGFF).

The protein to M.genitalium MG225.

It is found in the cell membrane. This is an uncharacterized protein from Mycoplasma genitalium (strain ATCC 33530 / DSM 19775 / NCTC 10195 / G37) (Mycoplasmoides genitalium).